The primary structure comprises 835 residues: Protein translocase subunit SecA (835 aa).

ATP-binding positions include Gln85, 103–107, and Asp492; that span reads GEGKT. Zn(2+) is bound by residues Cys819, Cys821, Cys830, and Cys831.

The protein belongs to the SecA family. As to quaternary structure, monomer and homodimer. Part of the essential Sec protein translocation apparatus which comprises SecA, SecYEG and auxiliary proteins SecDF. Other proteins may also be involved. Zn(2+) is required as a cofactor.

It is found in the cell membrane. The protein resides in the cytoplasm. It carries out the reaction ATP + H2O + cellular proteinSide 1 = ADP + phosphate + cellular proteinSide 2.. In terms of biological role, part of the Sec protein translocase complex. Interacts with the SecYEG preprotein conducting channel. Has a central role in coupling the hydrolysis of ATP to the transfer of proteins into and across the cell membrane, serving as an ATP-driven molecular motor driving the stepwise translocation of polypeptide chains across the membrane. This chain is Protein translocase subunit SecA, found in Clostridium botulinum (strain Loch Maree / Type A3).